Reading from the N-terminus, the 120-residue chain is UPF0145 protein Bcenmc03_5217 (120 aa).

It belongs to the UPF0145 family.

This is UPF0145 protein Bcenmc03_5217 from Burkholderia orbicola (strain MC0-3).